The primary structure comprises 74 residues: Omega-conotoxin-like PuIIA (74 aa).

An N-terminal signal peptide occupies residues 1 to 22 (MKLTCVVIVAVLFLTACQLITA). A propeptide spanning residues 23 to 46 (ETYSRGEQKHRALSSTDKNSKLTR) is cleaved from the precursor. Disulfide bonds link C48–C62, C55–C66, and C61–C73.

Belongs to the conotoxin O1 superfamily. As to expression, expressed by the venom duct.

It is found in the secreted. Its function is as follows. Omega-conotoxins act at presynaptic membranes, they bind and block voltage-gated calcium channels (Cav). In Conus pulicarius (Flea-bitten cone), this protein is Omega-conotoxin-like PuIIA.